The sequence spans 196 residues: Peptide methionine sulfoxide reductase (196 aa).

The span at 1–14 (MEGNNSSSKSTTNP) shows a compositional bias: polar residues. Residues 1 to 23 (MEGNNSSSKSTTNPALDPDLDSP) form a disordered region.

This sequence belongs to the MsrA Met sulfoxide reductase family.

The catalysed reaction is L-methionyl-[protein] + [thioredoxin]-disulfide + H2O = L-methionyl-(S)-S-oxide-[protein] + [thioredoxin]-dithiol. The enzyme catalyses [thioredoxin]-disulfide + L-methionine + H2O = L-methionine (S)-S-oxide + [thioredoxin]-dithiol. Its function is as follows. Has an important function as a repair enzyme for proteins that have been inactivated by oxidation. Catalyzes the reversible oxidation-reduction of methionine sulfoxide in proteins to methionine. The protein is Peptide methionine sulfoxide reductase (E4) of Solanum lycopersicum (Tomato).